The following is a 474-amino-acid chain: Iroquois-class homeodomain protein IRX-2 (474 aa).

Positions 115–177 (DPAYRKNATR…NARRRLKKEN (63 aa)) form a DNA-binding region, homeobox; TALE-type. 3 disordered regions span residues 177–220 (NKMT…EDEG), 262–373 (EDLE…PGGS), and 420–461 (PGET…DTSE). Residue S187 is modified to Phosphoserine. Basic and acidic residues predominate over residues 196–210 (DASRSKEESSDKAQD). The span at 262-275 (EDLEDEEDEEDECE) shows a compositional bias: acidic residues. Composition is skewed to low complexity over residues 293–305 (EAPL…EAAP) and 358–373 (PAAA…PGGS).

Belongs to the TALE/IRO homeobox family. As to expression, expressed in specific and overlapping patterns with Irx1 and Irx3 in the developing and adult metanephric kidney. In the adult metanephros, renal expression is found in the loop of Henle in the S3 proximal tubule segment and in the thick ascending limb (TAL) of the distal tubule.

It is found in the nucleus. The sequence is that of Iroquois-class homeodomain protein IRX-2 (Irx2) from Mus musculus (Mouse).